A 504-amino-acid chain; its full sequence is L-carnitine/gamma-butyrobetaine antiporter (504 aa).

12 consecutive transmembrane segments (helical) span residues 10 to 30, 51 to 71, 92 to 112, 143 to 163, 195 to 215, 231 to 251, 263 to 283, 316 to 336, 347 to 367, 398 to 418, 446 to 466, and 475 to 495; these read IEPK…WLTV, WGWA…WLVF, IFMM…SIEI, GPLP…FFFV, FYLV…TPLV, LDAI…ACGL, SYLS…SFIM, WTVF…IFLA, LCFG…TVLG, WAAL…CFIA, LLVR…LLAL, and AIIA…LSFI.

Belongs to the BCCT transporter (TC 2.A.15) family. CaiT subfamily. In terms of assembly, homotrimer.

It is found in the cell inner membrane. The enzyme catalyses 4-(trimethylamino)butanoate(in) + (R)-carnitine(out) = 4-(trimethylamino)butanoate(out) + (R)-carnitine(in). Its pathway is amine and polyamine metabolism; carnitine metabolism. In terms of biological role, catalyzes the exchange of L-carnitine for gamma-butyrobetaine. The chain is L-carnitine/gamma-butyrobetaine antiporter from Escherichia coli (strain K12 / MC4100 / BW2952).